Reading from the N-terminus, the 342-residue chain is Pre-mRNA-splicing factor 18 (342 aa).

This sequence belongs to the PRP18 family. As to quaternary structure, interacts with the spliceosome. Part of a complex containing U4/U6 snRNPs.

The protein localises to the nucleus speckle. Its function is as follows. Participates in the second step of pre-mRNA splicing. This chain is Pre-mRNA-splicing factor 18 (prpf18), found in Xenopus laevis (African clawed frog).